The following is a 420-amino-acid chain: Na(+)/H(+) antiporter NhaA (420 aa).

The next 10 helical transmembrane spans lie at 34 to 54 (TTGG…ANLG), 69 to 89 (LTIE…IAGL), 107 to 127 (LVPI…YTLF), 141 to 161 (IPMA…GAGL), 168 to 190 (FLLT…FFST), 194 to 213 (IWWL…MQHF), 271 to 291 (WSAG…HVSG), 301 to 321 (PISL…ITLG), 342 to 362 (IIAV…MTDL), and 374 to 394 (AKAS…AMLH).

This sequence belongs to the NhaA Na(+)/H(+) (TC 2.A.33) antiporter family.

Its subcellular location is the cell membrane. It catalyses the reaction Na(+)(in) + 2 H(+)(out) = Na(+)(out) + 2 H(+)(in). Na(+)/H(+) antiporter that extrudes sodium in exchange for external protons. The polypeptide is Na(+)/H(+) antiporter NhaA (Cutibacterium acnes (strain DSM 16379 / KPA171202) (Propionibacterium acnes)).